A 43-amino-acid chain; its full sequence is Protein PsbN (43 aa).

Residues 7-27 traverse the membrane as a helical segment; that stretch reads VAIFISCLLVSFTGYALYTAF.

This sequence belongs to the PsbN family.

The protein localises to the plastid. It localises to the chloroplast thylakoid membrane. May play a role in photosystem I and II biogenesis. The polypeptide is Protein PsbN (Zygnema circumcarinatum (Green alga)).